A 178-amino-acid polypeptide reads, in one-letter code: Actin-related protein 2/3 complex subunit 3-A (178 aa).

This sequence belongs to the ARPC3 family. In terms of assembly, component of the Arp2/3 complex composed of actr2/arp2, actr3/arp3, arpc1 (arpc1a or arpc1b), arpc2, arpc3, arpc4 and arpc5.

It localises to the cytoplasm. Its subcellular location is the cytoskeleton. The protein localises to the cell projection. It is found in the nucleus. Functionally, component of the Arp2/3 complex, a multiprotein complex that mediates actin polymerization upon stimulation by nucleation-promoting factor (NPF). The Arp2/3 complex mediates the formation of branched actin networks in the cytoplasm, providing the force for cell motility. In addition to its role in the cytoplasmic cytoskeleton, the Arp2/3 complex also promotes actin polymerization in the nucleus, thereby regulating gene transcription and repair of damaged DNA. The Arp2/3 complex promotes homologous recombination (HR) repair in response to DNA damage by promoting nuclear actin polymerization, leading to drive motility of double-strand breaks (DSBs). The protein is Actin-related protein 2/3 complex subunit 3-A (arpc3-a) of Xenopus laevis (African clawed frog).